A 247-amino-acid chain; its full sequence is Coproheme decarboxylase (247 aa).

Fe-coproporphyrin III-binding positions include Arg-129, 143 to 147 (YPMDK), His-170, Gln-183, and Ser-221. The active site involves Tyr-143.

The protein belongs to the ChdC family. Type 1 subfamily. Requires Fe-coproporphyrin III as cofactor.

It carries out the reaction Fe-coproporphyrin III + 2 H2O2 + 2 H(+) = heme b + 2 CO2 + 4 H2O. The enzyme catalyses Fe-coproporphyrin III + H2O2 + H(+) = harderoheme III + CO2 + 2 H2O. It catalyses the reaction harderoheme III + H2O2 + H(+) = heme b + CO2 + 2 H2O. Its pathway is porphyrin-containing compound metabolism; protoheme biosynthesis. In terms of biological role, involved in coproporphyrin-dependent heme b biosynthesis. Catalyzes the decarboxylation of Fe-coproporphyrin III (coproheme) to heme b (protoheme IX), the last step of the pathway. The reaction occurs in a stepwise manner with a three-propionate intermediate. This chain is Coproheme decarboxylase, found in Bacillus mycoides (strain KBAB4) (Bacillus weihenstephanensis).